The following is an 87-amino-acid chain: Putative sodium channel toxin Ts40 (87 aa).

An N-terminal signal peptide occupies residues 1-19 (MTALFYLLFLTSVIIETHQ). 3 disulfides stabilise this stretch: cysteine 41-cysteine 63, cysteine 47-cysteine 68, and cysteine 51-cysteine 70.

Belongs to the long (4 C-C) scorpion toxin superfamily. Sodium channel inhibitor family. Expressed by the venom gland.

It localises to the secreted. In terms of biological role, putative sodium channel toxin. In Tityus serrulatus (Brazilian scorpion), this protein is Putative sodium channel toxin Ts40.